The chain runs to 474 residues: ATP synthase subunit beta 2 (474 aa).

Residue glycine 156–threonine 163 participates in ATP binding.

This sequence belongs to the ATPase alpha/beta chains family. F-type ATPases have 2 components, CF(1) - the catalytic core - and CF(0) - the membrane proton channel. CF(1) has five subunits: alpha(3), beta(3), gamma(1), delta(1), epsilon(1). CF(0) has three main subunits: a(1), b(2) and c(9-12). The alpha and beta chains form an alternating ring which encloses part of the gamma chain. CF(1) is attached to CF(0) by a central stalk formed by the gamma and epsilon chains, while a peripheral stalk is formed by the delta and b chains.

The protein localises to the cell inner membrane. It carries out the reaction ATP + H2O + 4 H(+)(in) = ADP + phosphate + 5 H(+)(out). Its function is as follows. Produces ATP from ADP in the presence of a proton gradient across the membrane. The catalytic sites are hosted primarily by the beta subunits. The sequence is that of ATP synthase subunit beta 2 from Shewanella frigidimarina (strain NCIMB 400).